The chain runs to 220 residues: Deoxyribose-phosphate aldolase (220 aa).

Asp89 functions as the Proton donor/acceptor in the catalytic mechanism. Lys151 (schiff-base intermediate with acetaldehyde) is an active-site residue. The active-site Proton donor/acceptor is the Lys180.

It belongs to the DeoC/FbaB aldolase family. DeoC type 1 subfamily. In terms of assembly, homotetramer, in solution and in the crystal structure.

It localises to the cytoplasm. It catalyses the reaction 2-deoxy-D-ribose 5-phosphate = D-glyceraldehyde 3-phosphate + acetaldehyde. The protein operates within carbohydrate degradation; 2-deoxy-D-ribose 1-phosphate degradation; D-glyceraldehyde 3-phosphate and acetaldehyde from 2-deoxy-alpha-D-ribose 1-phosphate: step 2/2. Functionally, catalyzes a reversible aldol reaction between acetaldehyde and D-glyceraldehyde 3-phosphate to generate 2-deoxy-D-ribose 5-phosphate. This is Deoxyribose-phosphate aldolase from Thermus thermophilus (strain ATCC 27634 / DSM 579 / HB8).